The sequence spans 52 residues: AANQHLCGSHLVEALYLVCGEKGFFYNPNKVGIVEQCCHKPCTIYELENYCN.

3 disulfides stabilise this stretch: Cys-7-Cys-38, Cys-19-Cys-51, and Cys-37-Cys-42.

Belongs to the insulin family. As to quaternary structure, heterodimer of a B chain and an A chain linked by two disulfide bonds.

It localises to the secreted. Functionally, insulin decreases blood glucose concentration. It increases cell permeability to monosaccharides, amino acids and fatty acids. It accelerates glycolysis, the pentose phosphate cycle, and glycogen synthesis in liver. In Atractosteus spatula (Alligator gar), this protein is Insulin (ins).